The chain runs to 456 residues: Keratin, type I cuticular Ha8 (456 aa).

The head stretch occupies residues 1–104 (MTSSYSSSSC…YGENTLNGHE (104 aa)). The IF rod domain maps to 104–415 (EKETMQFLND…NLLESEDCKL (312 aa)). A coil 1A region spans residues 105–139 (KETMQFLNDRLANYLEKVRQLEQENAELEATLLER). The segment at 140 to 150 (SKCHESTVCPD) is linker 1. Residues 151 to 251 (YQSYFHTIEE…HEQEVKILRS (101 aa)) form a coil 1B region. Positions 252–267 (QLGEKLRIELDIEPTI) are linker 12. Residues 268–411 (DLNRVLGEMR…ATYRNLLESE (144 aa)) form a coil 2 region. The segment at 412 to 456 (DCKLPCNPCSTSPSCVTAPCAPRPSCGPCTTCGPTCGASTTGSRF) is tail.

Belongs to the intermediate filament family.

In Homo sapiens (Human), this protein is Keratin, type I cuticular Ha8 (KRT38).